A 76-amino-acid chain; its full sequence is UPF0346 protein lhv_1069 (76 aa).

Belongs to the UPF0346 family.

The chain is UPF0346 protein lhv_1069 from Lactobacillus helveticus (strain DPC 4571).